The following is a 549-amino-acid chain: Ankyrin repeat domain-containing protein SOWAHA (549 aa).

The signal sequence occupies residues 1-17 (MALAAAAAAAAAGVSQA). Disordered stretches follow at residues 82 to 219 (KPRP…PCML) and 235 to 256 (EEPGLRRQLSEEPSPRSSPLLL). Residues 203–216 (PGPGAAKGPPQQKP) are compositionally biased toward low complexity. The segment covering 235-248 (EEPGLRRQLSEEPS) has biased composition (basic and acidic residues). S260 bears the Phosphoserine mark. ANK repeat units lie at residues 345 to 374 (SGFTALHWAAKSGDGEMALQLVEVARRSGA) and 384 to 414 (GGYTPLHLAALHGHEDAAVLLVVRLGAQVHV). A disordered region spans residues 513–549 (PRKKTKIRGGLPAFSEISRRPTPGPLAGLVPSLPPTT).

This sequence belongs to the SOWAH family.

The sequence is that of Ankyrin repeat domain-containing protein SOWAHA (SOWAHA) from Homo sapiens (Human).